The chain runs to 993 residues: Desmoglein-3 (993 aa).

Positions 1–23 are cleaved as a signal peptide; that stretch reads MTCLFPRALGSLALLMVVLLVQG. The propeptide occupies 24 to 49; that stretch reads ELHVKPGGQHREDGTALQLAKRRYKR. 4 Cadherin domains span residues 50–157, 158–267, 268–388, and 384–495; these read EWVK…PPIF, SQTI…FPVL, RESQ…PPSK, and RPPS…CPSV. Residues 50-617 lie on the Extracellular side of the membrane; sequence EWVKFAKPCR…YGESSWRLGP (568 aa). 2 N-linked (GlcNAc...) asparagine glycosylation sites follow: Asn110 and Asn180. N-linked (GlcNAc...) asparagine glycans are attached at residues Asn459 and Asn546. The chain crosses the membrane as a helical span at residues 618–638; that stretch reads AAIGLILLGLLMLLLAPLLLL. The Cytoplasmic portion of the chain corresponds to 639–993; sequence TCDCGSGPIG…LYTKETCSHL (355 aa). The interval 641–714 is required for interaction with CTNND1 and localization at cell-cell junctions; that stretch reads DCGSGPIGGA…NTYAGGTMVE (74 aa). Residues 845 to 876 form a disordered region; that stretch reads AKQAKPGPKDSGSGADTCARSMEVPQSGSNRY. Desmoglein repeat repeat units follow at residues 905–930 and 931–961; these read MSTS…LLTE and TYST…ERVI.

Homodimer. Part of a complex that contains DSG3, PKP1, YAP1 and YWHAG; the complex is required for localization of DSG3 and YAP1 to the cell membrane in keratinocytes. Interacts with PKP2. Interacts with CTNND1; the interaction facilitates DSG3 localization and retention at cell-cell junctions. Interacts with CDH1; the interaction is required for CDH1 localization to developing adherens junctions. Interacts with RAC1; the interaction is required for DSG3 translocation to cell-cell junctions, organization of cortical F-actin bundles and actin anchoring at cell-cell junctions. Interacts with DSC3; the interaction may limit the interaction of DSC3 with p38MAPK family members and therefore repress p38MAPK signaling activation. As to expression, expressed in the basal layer of the outer root sheath of the telogen hair club, specifically at the cell membrane between the apex of the cells and the surrounding hair club (at protein level). Expression is less abundant between the lateral margins of the outer root sheath basal cells (at protein level). Expressed in epidermis. Expressed in the epithelium of the tongue.

It localises to the cell membrane. The protein resides in the cell junction. The protein localises to the desmosome. It is found in the cytoplasm. Its subcellular location is the tight junction. Its function is as follows. A component of desmosome cell-cell junctions which are required for positive regulation of cellular adhesion. Required for adherens and desmosome junction assembly in response to mechanical force in keratinocytes. Required for desmosome-mediated cell-cell adhesion of cells surrounding the telogen hair club and the basal layer of the outer root sheath epithelium, consequently is essential for the anchoring of telogen hairs in the hair follicle. Required for the maintenance of the epithelial barrier via promoting desmosome-mediated intercellular attachment of suprabasal epithelium to basal cells. May play a role in the protein stability of the desmosome plaque components DSP, JUP, PKP1, PKP2 and PKP3. Required for YAP1 localization at the plasma membrane in keratinocytes in response to mechanical strain, via the formation of an interaction complex composed of DSG3, PKP1 and YWHAG. May also be involved in the positive regulation of YAP1 target gene transcription and as a result cell proliferation. Positively regulates cellular contractility and cell junction formation via organization of cortical F-actin bundles and anchoring of actin to tight junctions, in conjunction with RAC1. The cytoplasmic pool of DSG3 is required for the localization of CDH1 and CTNNB1 at developing adherens junctions, potentially via modulation of SRC activity. Inhibits keratinocyte migration via suppression of p38MAPK signaling, may therefore play a role in moderating wound healing. This chain is Desmoglein-3 (Dsg3), found in Mus musculus (Mouse).